We begin with the raw amino-acid sequence, 324 residues long: Beta-ketoacyl-[acyl-carrier-protein] synthase III (324 aa).

Active-site residues include cysteine 114 and histidine 251. Residues glutamine 252–arginine 256 form an ACP-binding region. Asparagine 281 is a catalytic residue.

This sequence belongs to the thiolase-like superfamily. FabH family. Homodimer.

It is found in the cytoplasm. It carries out the reaction malonyl-[ACP] + acetyl-CoA + H(+) = 3-oxobutanoyl-[ACP] + CO2 + CoA. It participates in lipid metabolism; fatty acid biosynthesis. Functionally, catalyzes the condensation reaction of fatty acid synthesis by the addition to an acyl acceptor of two carbons from malonyl-ACP. Catalyzes the first condensation reaction which initiates fatty acid synthesis and may therefore play a role in governing the total rate of fatty acid production. Possesses both acetoacetyl-ACP synthase and acetyl transacylase activities. Its substrate specificity determines the biosynthesis of branched-chain and/or straight-chain of fatty acids. The sequence is that of Beta-ketoacyl-[acyl-carrier-protein] synthase III from Dinoroseobacter shibae (strain DSM 16493 / NCIMB 14021 / DFL 12).